A 54-amino-acid polypeptide reads, in one-letter code: Potassium channel toxin alpha-KTx 14.3 (54 aa).

The signal sequence occupies residues 1–23; that stretch reads MKIFFAILLILAVCSMAIWTVNG.

This sequence belongs to the short scorpion toxin superfamily. Potassium channel inhibitor family. Alpha-KTx 14 subfamily. Contains 3 disulfide bridges. In terms of tissue distribution, expressed by the venom gland.

The protein resides in the secreted. Its function is as follows. Potential blocker of potassium channels. The protein is Potassium channel toxin alpha-KTx 14.3 of Olivierus martensii (Manchurian scorpion).